Consider the following 402-residue polypeptide: Protein DesVIII (402 aa).

The protein belongs to the cytochrome P450 family. As to quaternary structure, forms a complex with DesVII.

It functions in the pathway antibiotic biosynthesis. In terms of biological role, involved in the biosynthesis of the macrolide antibiotics methymycin, neomethymycin, narbomycin, and pikromycin. DesVIII assists the folding of the DesVII polypeptide. However, unlike chaperones, it remains bound to DesVII during catalysis, forming a tight DesVII/DesVIII complex. Although the formation of the DesVII/DesVIII complex is essential for the catalytic activity, DesVIII is unlikely to be involved in catalysis directly. This chain is Protein DesVIII, found in Streptomyces venezuelae.